The primary structure comprises 297 residues: Pyridoxal 5'-phosphate synthase subunit PdxS (297 aa).

A D-ribose 5-phosphate-binding site is contributed by D27. Residue K84 is the Schiff-base intermediate with D-ribose 5-phosphate of the active site. G156 contributes to the D-ribose 5-phosphate binding site. Residue R168 coordinates D-glyceraldehyde 3-phosphate. Residues G217 and 238 to 239 (GS) contribute to the D-ribose 5-phosphate site.

This sequence belongs to the PdxS/SNZ family. In terms of assembly, in the presence of PdxT, forms a dodecamer of heterodimers.

It catalyses the reaction aldehydo-D-ribose 5-phosphate + D-glyceraldehyde 3-phosphate + L-glutamine = pyridoxal 5'-phosphate + L-glutamate + phosphate + 3 H2O + H(+). Its pathway is cofactor biosynthesis; pyridoxal 5'-phosphate biosynthesis. Functionally, catalyzes the formation of pyridoxal 5'-phosphate from ribose 5-phosphate (RBP), glyceraldehyde 3-phosphate (G3P) and ammonia. The ammonia is provided by the PdxT subunit. Can also use ribulose 5-phosphate and dihydroxyacetone phosphate as substrates, resulting from enzyme-catalyzed isomerization of RBP and G3P, respectively. This Corynebacterium efficiens (strain DSM 44549 / YS-314 / AJ 12310 / JCM 11189 / NBRC 100395) protein is Pyridoxal 5'-phosphate synthase subunit PdxS.